The sequence spans 233 residues: 5'-methylthioadenosine/S-adenosylhomocysteine nucleosidase (233 aa).

Glutamate 12 functions as the Proton acceptor in the catalytic mechanism. Substrate-binding positions include glycine 78, isoleucine 156, and 177-178 (ME). Catalysis depends on aspartate 201, which acts as the Proton donor.

Belongs to the PNP/UDP phosphorylase family. MtnN subfamily.

It carries out the reaction S-adenosyl-L-homocysteine + H2O = S-(5-deoxy-D-ribos-5-yl)-L-homocysteine + adenine. The catalysed reaction is S-methyl-5'-thioadenosine + H2O = 5-(methylsulfanyl)-D-ribose + adenine. The enzyme catalyses 5'-deoxyadenosine + H2O = 5-deoxy-D-ribose + adenine. The protein operates within amino-acid biosynthesis; L-methionine biosynthesis via salvage pathway; S-methyl-5-thio-alpha-D-ribose 1-phosphate from S-methyl-5'-thioadenosine (hydrolase route): step 1/2. Catalyzes the irreversible cleavage of the glycosidic bond in both 5'-methylthioadenosine (MTA) and S-adenosylhomocysteine (SAH/AdoHcy) to adenine and the corresponding thioribose, 5'-methylthioribose and S-ribosylhomocysteine, respectively. Also cleaves 5'-deoxyadenosine, a toxic by-product of radical S-adenosylmethionine (SAM) enzymes, into 5-deoxyribose and adenine. The polypeptide is 5'-methylthioadenosine/S-adenosylhomocysteine nucleosidase (Listeria monocytogenes serovar 1/2a (strain ATCC BAA-679 / EGD-e)).